The following is a 901-amino-acid chain: Protein translocase subunit SecA (901 aa).

ATP contacts are provided by residues glutamine 85, 103–107 (GEGKT), and aspartate 510. The tract at residues 848–901 (RINQNNLPVDENSQTTQNSETEDYSDRRIGRNEPCPCGSGKKYKHCHGSRVARQ) is disordered. Residues 849–866 (INQNNLPVDENSQTTQNS) show a composition bias toward polar residues. Cysteine 882, cysteine 884, cysteine 893, and histidine 894 together coordinate Zn(2+). Positions 888–901 (KKYKHCHGSRVARQ) are enriched in basic residues.

The protein belongs to the SecA family. Monomer and homodimer. Part of the essential Sec protein translocation apparatus which comprises SecA, SecYEG and auxiliary proteins SecDF-YajC and YidC. It depends on Zn(2+) as a cofactor.

The protein resides in the cell inner membrane. It localises to the cytoplasm. The catalysed reaction is ATP + H2O + cellular proteinSide 1 = ADP + phosphate + cellular proteinSide 2.. Functionally, part of the Sec protein translocase complex. Interacts with the SecYEG preprotein conducting channel. Has a central role in coupling the hydrolysis of ATP to the transfer of proteins into and across the cell membrane, serving both as a receptor for the preprotein-SecB complex and as an ATP-driven molecular motor driving the stepwise translocation of polypeptide chains across the membrane. The sequence is that of Protein translocase subunit SecA from Haemophilus influenzae (strain 86-028NP).